We begin with the raw amino-acid sequence, 221 residues long: Probable hydrogenase maturation factor HypB (221 aa).

Positions 35–196 (AFDFMGAIGS…KRINPDAEVV (162 aa)) are G-domain. Residues Cys-95 and His-96 each coordinate Ni(2+). Zn(2+) contacts are provided by Cys-95, His-96, His-100, His-104, and Cys-127. Cys-127 is a Ni(2+) binding site.

Belongs to the SIMIBI class G3E GTPase family. HypB/HupM subfamily. Homodimer.

In terms of biological role, involved in the maturation of [NiFe] hydrogenases. Required for nickel insertion into the metal center of the hydrogenase. Exhibits a low intrinsic GTPase activity, which is essential for nickel insertion. The polypeptide is Probable hydrogenase maturation factor HypB (Methanocaldococcus jannaschii (strain ATCC 43067 / DSM 2661 / JAL-1 / JCM 10045 / NBRC 100440) (Methanococcus jannaschii)).